The following is a 394-amino-acid chain: MAKEAFDRSLPHVNIGTIGHVDHGKTTLTAAITKVLADKGGAEFKDYANIDNAPEERERGITINTSHVEYKTENRHYAHVDCPGHADYVKNMITGAAQMDGGILVVAATDGPMPQTREHILLSRQVGVPKIVVFLNKCDMVDDEEMIDLVEMEVRDLLSAYDFDGDGAPVIRGSALGALNGEAKWVAAIEELMAAVDEYIPTPTRDSDKTFLMPVEDVFTITGRGTVATGRVERGTIKVNEEVEIVGLVEEAKKTVVTGLEMFRKLLDFAEAGDNVGALLRGVDRESIERGQVLAKPGTIKPHTKLQASVYALTTEEGGRQKPFFNKYRPQFYFRTTDVTGEVILPAGTDMVMPGDNVEMTVELIKPIAVEDGTKFSIREGGRTIGAGTVISVQ.

A tr-type G domain is found at 10–204 (LPHVNIGTIG…AVDEYIPTPT (195 aa)). The tract at residues 19–26 (GHVDHGKT) is G1. 19-26 (GHVDHGKT) is a GTP binding site. Position 26 (threonine 26) interacts with Mg(2+). Residues 60 to 64 (GITIN) are G2. A G3 region spans residues 81–84 (DCPG). Residues 81-85 (DCPGH) and 136-139 (NKCD) each bind GTP. A G4 region spans residues 136–139 (NKCD). A G5 region spans residues 174–176 (SAL).

Belongs to the TRAFAC class translation factor GTPase superfamily. Classic translation factor GTPase family. EF-Tu/EF-1A subfamily. As to quaternary structure, monomer.

The protein resides in the cytoplasm. The enzyme catalyses GTP + H2O = GDP + phosphate + H(+). GTP hydrolase that promotes the GTP-dependent binding of aminoacyl-tRNA to the A-site of ribosomes during protein biosynthesis. In Mesoplasma florum (strain ATCC 33453 / NBRC 100688 / NCTC 11704 / L1) (Acholeplasma florum), this protein is Elongation factor Tu.